We begin with the raw amino-acid sequence, 134 residues long: Small ribosomal subunit protein bS6 (134 aa).

Residues 103–134 form a disordered region; it reads AAPVKSAEEGTEEVAAEAATEAPAETTTTVEV. A compositionally biased stretch (low complexity) spans 118-134; it reads AEAATEAPAETTTTVEV.

The protein belongs to the bacterial ribosomal protein bS6 family.

Its function is as follows. Binds together with bS18 to 16S ribosomal RNA. This Geobacter sp. (strain M21) protein is Small ribosomal subunit protein bS6.